A 386-amino-acid chain; its full sequence is Pepsin A (386 aa).

Residues 1–15 form the signal peptide; sequence MKWLLLISLVALSEC. Positions 16-60 are cleaved as a propeptide — activation peptide; that stretch reads AIVKVPLVRKKSLRQNLIEHGLLNDFLKNQSPNPASKYFPQEPTV. In terms of domain architecture, Peptidase A1 spans 74–383; it reads YFGTIGIGTP…DRANNQVGLA (310 aa). Asp92 is a catalytic residue. Cystine bridges form between Cys105/Cys110 and Cys266/Cys270. Asp275 is an active-site residue. The cysteines at positions 309 and 342 are disulfide-linked.

It belongs to the peptidase A1 family.

The protein resides in the secreted. It catalyses the reaction Preferential cleavage: hydrophobic, preferably aromatic, residues in P1 and P1' positions. Cleaves 1-Phe-|-Val-2, 4-Gln-|-His-5, 13-Glu-|-Ala-14, 14-Ala-|-Leu-15, 15-Leu-|-Tyr-16, 16-Tyr-|-Leu-17, 23-Gly-|-Phe-24, 24-Phe-|-Phe-25 and 25-Phe-|-Tyr-26 bonds in the B chain of insulin.. In terms of biological role, shows particularly broad specificity; although bonds involving phenylalanine and leucine are preferred, many others are also cleaved to some extent. This is Pepsin A (PGA) from Canis lupus familiaris (Dog).